The primary structure comprises 277 residues: Caspase-3 (277 aa).

Met-1 carries the post-translational modification N-acetylmethionine. 2 propeptides span residues 1-9 and 10-28; these read MENTENSVD and SKSI…KSVD. Lys-11 is subject to N6-acetyllysine. Position 26 is a phosphoserine (Ser-26). Residues His-121 and Cys-163 contribute to the active site. Cys-163 carries the post-translational modification S-nitrosocysteine; in inhibited form.

It belongs to the peptidase C14A family. In terms of assembly, heterotetramer that consists of two anti-parallel arranged heterodimers, each one formed by a 17 kDa (p17) and a 12 kDa (p12) subunit. Interacts with BIRC6/bruce. In terms of processing, cleavage by granzyme B, caspase-6, caspase-8 and caspase-10 generates the two active subunits. Additional processing of the propeptides is likely due to the autocatalytic activity of the activated protease. Active heterodimers between the small subunit of caspase-7 protease and the large subunit of caspase-3 also occur and vice versa. S-nitrosylated on its catalytic site cysteine in unstimulated cell lines and denitrosylated upon activation of the Fas apoptotic pathway, associated with an increase in intracellular caspase activity. Fas therefore activates caspase-3 not only by inducing the cleavage of the caspase zymogen to its active subunits, but also by stimulating the denitrosylation of its active site thiol. Post-translationally, ubiquitinated by BIRC6; this activity is inhibited by DIABLO/SMAC.

It localises to the cytoplasm. The catalysed reaction is Strict requirement for an Asp residue at positions P1 and P4. It has a preferred cleavage sequence of Asp-Xaa-Xaa-Asp-|- with a hydrophobic amino-acid residue at P2 and a hydrophilic amino-acid residue at P3, although Val or Ala are also accepted at this position.. Its activity is regulated as follows. Inhibited by BIRC6; following inhibition of BIRC6-caspase binding by DIABLO/SMAC, BIRC6 is subjected to caspase cleavage, leading to an increase in active caspases. Functionally, involved in the activation cascade of caspases responsible for apoptosis execution. At the onset of apoptosis, it proteolytically cleaves poly(ADP-ribose) polymerase PARP1 at a '216-Asp-|-Gly-217' bond. Cleaves and activates sterol regulatory element binding proteins (SREBPs) between the basic helix-loop-helix leucine zipper domain and the membrane attachment domain. Cleaves and activates caspase-6, -7 and -9 (CASP6, CASP7 and CASP9, respectively). Cleaves and inactivates interleukin-18 (IL18). Triggers cell adhesion in sympathetic neurons through RET cleavage. Cleaves IL-1 beta between an Asp and an Ala, releasing the mature cytokine which is involved in a variety of inflammatory processes. Cleaves and inhibits serine/threonine-protein kinase AKT1 in response to oxidative stress. Acts as an inhibitor of type I interferon production during virus-induced apoptosis by mediating cleavage of antiviral proteins CGAS, IRF3 and MAVS, thereby preventing cytokine overproduction. Also involved in pyroptosis by mediating cleavage and activation of gasdermin-E (GSDME). Cleaves XRCC4 and phospholipid scramblase proteins XKR4, XKR8 and XKR9, leading to promote phosphatidylserine exposure on apoptotic cell surface. Cleaves BIRC6 following inhibition of BIRC6-caspase binding by DIABLO/SMAC. In Macaca fascicularis (Crab-eating macaque), this protein is Caspase-3 (CASP3).